Here is a 656-residue protein sequence, read N- to C-terminus: Macrolide export ATP-binding/permease protein MacB (656 aa).

In terms of domain architecture, ABC transporter spans 6-244 (LEVSACYRSF…VKAQVDMSLA (239 aa)). Position 42 to 49 (42 to 49 (GASGSGKS)) interacts with ATP. 4 consecutive transmembrane segments (helical) span residues 277-297 (FLTM…VALG), 531-551 (LLIS…VMNI), 586-606 (LVCL…GVVF), and 621-641 (SIVA…FLPA).

It belongs to the ABC transporter superfamily. Macrolide exporter (TC 3.A.1.122) family. Homodimer. Part of the tripartite efflux system MacAB-TolC, which is composed of an inner membrane transporter, MacB, a periplasmic membrane fusion protein, MacA, and an outer membrane component, TolC. The complex forms a large protein conduit and can translocate molecules across both the inner and outer membranes. Interacts with MacA.

The protein localises to the cell inner membrane. Part of the tripartite efflux system MacAB-TolC. MacB is a non-canonical ABC transporter that contains transmembrane domains (TMD), which form a pore in the inner membrane, and an ATP-binding domain (NBD), which is responsible for energy generation. Confers resistance against macrolides. The chain is Macrolide export ATP-binding/permease protein MacB from Shewanella oneidensis (strain ATCC 700550 / JCM 31522 / CIP 106686 / LMG 19005 / NCIMB 14063 / MR-1).